Here is a 309-residue protein sequence, read N- to C-terminus: Elongation factor Ts (309 aa).

The segment at 82-85 (TDFV) is involved in Mg(2+) ion dislocation from EF-Tu.

Belongs to the EF-Ts family.

Its subcellular location is the cytoplasm. Its function is as follows. Associates with the EF-Tu.GDP complex and induces the exchange of GDP to GTP. It remains bound to the aminoacyl-tRNA.EF-Tu.GTP complex up to the GTP hydrolysis stage on the ribosome. The sequence is that of Elongation factor Ts from Rickettsia rickettsii (strain Iowa).